A 236-amino-acid chain; its full sequence is Probable transcriptional regulatory protein UUR10_0292 (236 aa).

This sequence belongs to the TACO1 family.

Its subcellular location is the cytoplasm. The protein is Probable transcriptional regulatory protein UUR10_0292 of Ureaplasma urealyticum serovar 10 (strain ATCC 33699 / Western).